Here is a 147-residue protein sequence, read N- to C-terminus: Nucleoside diphosphate kinase (147 aa).

ATP is bound by residues K9, F57, R85, T91, R102, and N112. Residue H115 is the Pros-phosphohistidine intermediate of the active site.

It belongs to the NDK family. Homotetramer. Mg(2+) serves as cofactor.

It is found in the cytoplasm. It carries out the reaction a 2'-deoxyribonucleoside 5'-diphosphate + ATP = a 2'-deoxyribonucleoside 5'-triphosphate + ADP. The catalysed reaction is a ribonucleoside 5'-diphosphate + ATP = a ribonucleoside 5'-triphosphate + ADP. Its function is as follows. Major role in the synthesis of nucleoside triphosphates other than ATP. The ATP gamma phosphate is transferred to the NDP beta phosphate via a ping-pong mechanism, using a phosphorylated active-site intermediate. The polypeptide is Nucleoside diphosphate kinase (Listeria welshimeri serovar 6b (strain ATCC 35897 / DSM 20650 / CCUG 15529 / CIP 8149 / NCTC 11857 / SLCC 5334 / V8)).